The sequence spans 325 residues: Lipoyl synthase (325 aa).

Residues 1 to 31 form a disordered region; sequence MASDSDLLDTKPAETRHPEKAHRPDQPTLRK. Positions 8–31 are enriched in basic and acidic residues; sequence LDTKPAETRHPEKAHRPDQPTLRK. [4Fe-4S] cluster contacts are provided by C61, C66, C72, C87, C91, C94, and S300. The 217-residue stretch at 73–289 folds into the Radical SAM core domain; sequence WAKKHATFMI…AEIGRAKGFL (217 aa).

The protein belongs to the radical SAM superfamily. Lipoyl synthase family. [4Fe-4S] cluster is required as a cofactor.

The protein localises to the cytoplasm. It catalyses the reaction [[Fe-S] cluster scaffold protein carrying a second [4Fe-4S](2+) cluster] + N(6)-octanoyl-L-lysyl-[protein] + 2 oxidized [2Fe-2S]-[ferredoxin] + 2 S-adenosyl-L-methionine + 4 H(+) = [[Fe-S] cluster scaffold protein] + N(6)-[(R)-dihydrolipoyl]-L-lysyl-[protein] + 4 Fe(3+) + 2 hydrogen sulfide + 2 5'-deoxyadenosine + 2 L-methionine + 2 reduced [2Fe-2S]-[ferredoxin]. The protein operates within protein modification; protein lipoylation via endogenous pathway; protein N(6)-(lipoyl)lysine from octanoyl-[acyl-carrier-protein]: step 2/2. Functionally, catalyzes the radical-mediated insertion of two sulfur atoms into the C-6 and C-8 positions of the octanoyl moiety bound to the lipoyl domains of lipoate-dependent enzymes, thereby converting the octanoylated domains into lipoylated derivatives. The polypeptide is Lipoyl synthase (Methylocella silvestris (strain DSM 15510 / CIP 108128 / LMG 27833 / NCIMB 13906 / BL2)).